A 100-amino-acid polypeptide reads, in one-letter code: ESAT-6-like protein EsxT (100 aa).

The protein belongs to the WXG100 family. ESAT-6 subfamily. As to quaternary structure, forms a tight 1:1 complex with EsxU.

Its subcellular location is the secreted. The sequence is that of ESAT-6-like protein EsxT from Mycobacterium tuberculosis (strain CDC 1551 / Oshkosh).